The primary structure comprises 609 residues: DNA mismatch repair protein MutL (609 aa).

It belongs to the DNA mismatch repair MutL/HexB family.

In terms of biological role, this protein is involved in the repair of mismatches in DNA. It is required for dam-dependent methyl-directed DNA mismatch repair. May act as a 'molecular matchmaker', a protein that promotes the formation of a stable complex between two or more DNA-binding proteins in an ATP-dependent manner without itself being part of a final effector complex. The sequence is that of DNA mismatch repair protein MutL from Rickettsia felis (strain ATCC VR-1525 / URRWXCal2) (Rickettsia azadi).